Here is a 247-residue protein sequence, read N- to C-terminus: Type III pantothenate kinase (247 aa).

6-13 contributes to the ATP binding site; sequence DVGNTSIY. 102 to 105 lines the substrate pocket; it reads GADL. Aspartate 104 (proton acceptor) is an active-site residue. Aspartate 122 lines the K(+) pocket. Threonine 125 lines the ATP pocket. Residue threonine 176 participates in substrate binding.

It belongs to the type III pantothenate kinase family. As to quaternary structure, homodimer. The cofactor is NH4(+). K(+) serves as cofactor.

The protein resides in the cytoplasm. It carries out the reaction (R)-pantothenate + ATP = (R)-4'-phosphopantothenate + ADP + H(+). The protein operates within cofactor biosynthesis; coenzyme A biosynthesis; CoA from (R)-pantothenate: step 1/5. Catalyzes the phosphorylation of pantothenate (Pan), the first step in CoA biosynthesis. This chain is Type III pantothenate kinase, found in Acholeplasma laidlawii (strain PG-8A).